A 256-amino-acid chain; its full sequence is Ribosomal RNA small subunit methyltransferase J (256 aa).

S-adenosyl-L-methionine contacts are provided by residues Arg-104–Asp-105, Glu-120–Arg-121, Ser-156–Ser-157, and Asp-174.

This sequence belongs to the methyltransferase superfamily. RsmJ family.

It is found in the cytoplasm. The catalysed reaction is guanosine(1516) in 16S rRNA + S-adenosyl-L-methionine = N(2)-methylguanosine(1516) in 16S rRNA + S-adenosyl-L-homocysteine + H(+). In terms of biological role, specifically methylates the guanosine in position 1516 of 16S rRNA. The sequence is that of Ribosomal RNA small subunit methyltransferase J from Yersinia pseudotuberculosis serotype O:3 (strain YPIII).